Reading from the N-terminus, the 31-residue chain is Glucagon-5 (31 aa).

The protein belongs to the glucagon family.

The protein resides in the secreted. Glucagon plays a key role in glucose metabolism and homeostasis. Regulates blood glucose by increasing gluconeogenesis and decreasing glycolysis. In Huso dauricus (Kaluga sturgeon), this protein is Glucagon-5.